Here is a 197-residue protein sequence, read N- to C-terminus: Nucleoside triphosphate pyrophosphatase (197 aa).

Residue D75 is the Proton acceptor of the active site.

This sequence belongs to the Maf family. A divalent metal cation is required as a cofactor.

It is found in the cytoplasm. It carries out the reaction a ribonucleoside 5'-triphosphate + H2O = a ribonucleoside 5'-phosphate + diphosphate + H(+). The catalysed reaction is a 2'-deoxyribonucleoside 5'-triphosphate + H2O = a 2'-deoxyribonucleoside 5'-phosphate + diphosphate + H(+). Nucleoside triphosphate pyrophosphatase. May have a dual role in cell division arrest and in preventing the incorporation of modified nucleotides into cellular nucleic acids. This is Nucleoside triphosphate pyrophosphatase from Haemophilus ducreyi (strain 35000HP / ATCC 700724).